A 347-amino-acid chain; its full sequence is D-alanine--D-alanine ligase (347 aa).

The ATP-grasp domain maps to 133 to 342 (KQAFAQASLP…FPDLVHRLIQ (210 aa)). 169-224 (ETELGYPCFVKPANLGSSVGIAKVRDRAELEAALDQAAALDRRLIIEAAIDNPREV) contributes to the ATP binding site. 3 residues coordinate Mg(2+): Asp296, Glu309, and Asn311.

This sequence belongs to the D-alanine--D-alanine ligase family. It depends on Mg(2+) as a cofactor. The cofactor is Mn(2+).

Its subcellular location is the cytoplasm. The enzyme catalyses 2 D-alanine + ATP = D-alanyl-D-alanine + ADP + phosphate + H(+). It participates in cell wall biogenesis; peptidoglycan biosynthesis. In terms of biological role, cell wall formation. The polypeptide is D-alanine--D-alanine ligase (Synechococcus elongatus (strain ATCC 33912 / PCC 7942 / FACHB-805) (Anacystis nidulans R2)).